Here is a 132-residue protein sequence, read N- to C-terminus: MSKGQVSVEFIVLFLALLVAVVVSTMTPGIFGLNKSVELSSASLAHAALSKVKSNIEILSVSGEGSYKLVYVKSPPANWTFENRTIRVYGNGFNISTNTSVDLNTYNYLASSLKILSVNLTRNDKNVTVAIQ.

A propeptide spanning residues 1–4 is cleaved from the precursor; sequence MSKG. The QXSXEXXXL motif lies at 9–19; it reads EFIVLFLALLV.

The N-terminus is probably cleaved by the prepilin peptidase EppA, which recognizes the class III signal sequence.

The protein resides in the secreted. The protein localises to the cell surface. It is found in the fimbrium. In terms of biological role, minor component of the type IV-like pili. Essential for pili formation. The polypeptide is Minor structural pilin EpdB (Methanococcus maripaludis (strain DSM 14266 / JCM 13030 / NBRC 101832 / S2 / LL)).